The sequence spans 505 residues: Maturase K (505 aa).

Belongs to the intron maturase 2 family. MatK subfamily.

It is found in the plastid. The protein resides in the chloroplast. Functionally, usually encoded in the trnK tRNA gene intron. Probably assists in splicing its own and other chloroplast group II introns. This chain is Maturase K, found in Physcomitrium patens (Spreading-leaved earth moss).